We begin with the raw amino-acid sequence, 346 residues long: Biotin synthase (346 aa).

One can recognise a Radical SAM core domain in the interval 38-256 (RQVQVSTLLS…IAVARIMMPT (219 aa)). Positions 53, 57, and 60 each coordinate [4Fe-4S] cluster. 4 residues coordinate [2Fe-2S] cluster: C97, C128, C188, and R260.

The protein belongs to the radical SAM superfamily. Biotin synthase family. In terms of assembly, homodimer. The cofactor is [4Fe-4S] cluster. Requires [2Fe-2S] cluster as cofactor.

The catalysed reaction is (4R,5S)-dethiobiotin + (sulfur carrier)-SH + 2 reduced [2Fe-2S]-[ferredoxin] + 2 S-adenosyl-L-methionine = (sulfur carrier)-H + biotin + 2 5'-deoxyadenosine + 2 L-methionine + 2 oxidized [2Fe-2S]-[ferredoxin]. It functions in the pathway cofactor biosynthesis; biotin biosynthesis; biotin from 7,8-diaminononanoate: step 2/2. Catalyzes the conversion of dethiobiotin (DTB) to biotin by the insertion of a sulfur atom into dethiobiotin via a radical-based mechanism. This Escherichia coli O157:H7 protein is Biotin synthase.